The sequence spans 328 residues: MATSALYACTKCNQRFPFEELSQGQQLCKECRIAHPIVKCTYCRSEFQQESKTNTICKKCAQNVKQFGTPKPCQYCNIIAAFIGTKCQRCTNSEKKYGPPQTCEQCKQQCAFDRKDEGRRKVDGKLLCWLCTLSYRRVLQKTKEQRKGLGSSHSNSSSLSEKEHQRHHHHHQHHRHGSSHHKISGNLSPEQDQGLWKQSIQKETPKKKPKLETKPSNGDSSSITQSMDSGGTDNFILISQLKEEVMSLKRMLQQRDQTILEKDRKLTELKADFQYQESNMRVKMNNMEKAHKEAMEQQQAKNRELLKQVAALSKGKKFDRSGSSLLLP.

The disordered stretch occupies residues 143–232 (KEQRKGLGSS…ITQSMDSGGT (90 aa)). The span at 148 to 159 (GLGSSHSNSSSL) shows a compositional bias: low complexity. Basic residues predominate over residues 165-183 (QRHHHHHQHHRHGSSHHKI). Polar residues predominate over residues 185–201 (GNLSPEQDQGLWKQSIQ). Ser188 carries the post-translational modification Phosphoserine. Positions 203-213 (ETPKKKPKLET) are enriched in basic and acidic residues. The segment covering 216-232 (SNGDSSSITQSMDSGGT) has biased composition (polar residues). Residues 237–316 (LISQLKEEVM…KQVAALSKGK (80 aa)) are a coiled coil.

Belongs to the FAM76 family. Highly expressed in hematopoietic and immune systems including in the thymus, spleen, kidney, and blood vessel.

Plays a role in hematopoiesis and immune system development, and participates in the inflammatory response. The sequence is that of Protein FAM76B (fam76b) from Danio rerio (Zebrafish).